The chain runs to 499 residues: Tetrathionate hydrolase (499 aa).

Positions 1–32 (MPSIVRNHGPHNKILLSALLLALFGWVPLASA) are cleaved as a signal peptide.

It belongs to the tetrathionate hydrolase family. In terms of assembly, homodimer.

It localises to the cell membrane. It catalyses the reaction tetrathionate + H2O = sulfur + thiosulfate + sulfate + H(+). Functionally, catalyzes the hydrolysis of tetrathionate to generate elemental sulfur, thiosulfate and sulfate. This chain is Tetrathionate hydrolase, found in Acidithiobacillus ferrooxidans (strain ATCC 23270 / DSM 14882 / CIP 104768 / NCIMB 8455) (Ferrobacillus ferrooxidans (strain ATCC 23270)).